We begin with the raw amino-acid sequence, 345 residues long: tRNA dimethylallyltransferase (345 aa).

Position 9 to 16 (9 to 16 (GPTASGKS)) interacts with ATP. 11 to 16 (TASGKS) serves as a coordination point for substrate. 2 interaction with substrate tRNA regions span residues 34 to 37 (DSMQ) and 195 to 199 (QRMIR).

It belongs to the IPP transferase family. As to quaternary structure, monomer. Mg(2+) serves as cofactor.

The enzyme catalyses adenosine(37) in tRNA + dimethylallyl diphosphate = N(6)-dimethylallyladenosine(37) in tRNA + diphosphate. Functionally, catalyzes the transfer of a dimethylallyl group onto the adenine at position 37 in tRNAs that read codons beginning with uridine, leading to the formation of N6-(dimethylallyl)adenosine (i(6)A). The protein is tRNA dimethylallyltransferase of Orientia tsutsugamushi (strain Boryong) (Rickettsia tsutsugamushi).